The chain runs to 487 residues: Fibroblast growth factor receptor-like 1 (487 aa).

The first 18 residues, 1–18 (MGLQLALLLAGIVALSDS), serve as a signal peptide directing secretion. The Extracellular segment spans residues 19-371 (ARGPPRIADK…PSSVSSLPWP (353 aa)). The Ig-like C2-type 1 domain maps to 23–109 (PRIADKVIHR…GSTNVNYTLI (87 aa)). An intrachain disulfide couples Cys-45 to Cys-93. Asn-105 carries an N-linked (GlcNAc...) asparagine glycan. A compositionally biased stretch (polar residues) spans 115-125 (SSGKNSQTPEG). The interval 115–147 (SSGKNSQTPEGSNGEYEDHSGKQWAQPRFTQPA) is disordered. Ig-like C2-type domains follow at residues 141 to 231 (PRFT…YKVE) and 240 to 348 (PILT…AFLT). A disulfide bridge links Cys-166 with Cys-215. 3 N-linked (GlcNAc...) asparagine glycosylation sites follow: Asn-225, Asn-249, and Asn-287. A disulfide bond links Cys-262 and Cys-332. A helical transmembrane segment spans residues 372-392 (VIIGIPAGAVFIFGTILLWLC). The Cytoplasmic portion of the chain corresponds to 393–487 (QTKKKPCSPP…HQHQHIQYQC (95 aa)).

In terms of assembly, interacts with heparin and FGF2. As to expression, expressed in cartilaginous structures.

The protein localises to the cell membrane. Has a negative effect on cell proliferation. The sequence is that of Fibroblast growth factor receptor-like 1 (FGFRL1) from Gallus gallus (Chicken).